We begin with the raw amino-acid sequence, 335 residues long: NAC domain-containing protein 40 (335 aa).

An NAC domain is found at L14 to N156. Residues V112–S162 mediate DNA binding. Over residues P245–I254 the composition is skewed to polar residues. The tract at residues P245–I267 is disordered. A helical membrane pass occupies residues V313–A333.

Post-translationally, proteolytically cleaved, probably by metalloprotease activity. This cleavage mediates a translocation from the plasma membrane to the nucleus. In terms of tissue distribution, expressed in seeds, leaves, roots and inflorescence. Expressed in roots, rosette leaves, cauline leaves, shoot apex, stems and flowers.

It is found in the cell membrane. It localises to the nucleus. Transcriptional activator activated by proteolytic cleavage through regulated intramembrane proteolysis (RIP), probably via metalloprotease activity. Regulates gibberellic acid-mediated salt-responsive repression of seed germination and flowering via FT, thus delaying seed germination under high salinity conditions. This chain is NAC domain-containing protein 40, found in Arabidopsis thaliana (Mouse-ear cress).